The sequence spans 60 residues: Large ribosomal subunit protein uL30 (60 aa).

This sequence belongs to the universal ribosomal protein uL30 family. Part of the 50S ribosomal subunit.

This chain is Large ribosomal subunit protein uL30, found in Desulfitobacterium hafniense (strain DSM 10664 / DCB-2).